Reading from the N-terminus, the 165-residue chain is Regulator of ribonuclease activity A (165 aa).

This sequence belongs to the RraA family. As to quaternary structure, homotrimer. Binds to both RNA-binding sites in the C-terminal region of Rne and to RhlB.

The protein resides in the cytoplasm. In terms of biological role, globally modulates RNA abundance by binding to RNase E (Rne) and regulating its endonucleolytic activity. Can modulate Rne action in a substrate-dependent manner by altering the composition of the degradosome. Modulates RNA-binding and helicase activities of the degradosome. This Actinobacillus pleuropneumoniae serotype 7 (strain AP76) protein is Regulator of ribonuclease activity A.